Here is a 993-residue protein sequence, read N- to C-terminus: Vacuolar membrane protease (993 aa).

Residues Met1–Thr24 are Cytoplasmic-facing. A helical membrane pass occupies residues Leu25–Val45. Residues Pro46–Thr391 are Vacuolar-facing. N-linked (GlcNAc...) asparagine glycans are attached at residues Asn59, Asn116, and Asn119. His175 and Asp187 together coordinate Zn(2+). Glu221 functions as the Proton acceptor in the catalytic mechanism. Glu222 contributes to the Zn(2+) binding site. N-linked (GlcNAc...) asparagine glycosylation occurs at Asn238. Glu247 and His320 together coordinate Zn(2+). The helical transmembrane segment at Leu392–Ile412 threads the bilayer. The Cytoplasmic portion of the chain corresponds to Ala413–Thr447. The helical transmembrane segment at Pro448 to Ile468 threads the bilayer. Topologically, residues Asn469–Ser475 are vacuolar. The chain crosses the membrane as a helical span at residues Ser476–Ala496. Topologically, residues Arg497 to Arg509 are cytoplasmic. The chain crosses the membrane as a helical span at residues Ala510 to Tyr530. Over Ala531–Lys534 the chain is Vacuolar. Residues Gly535–Val555 traverse the membrane as a helical segment. Residues Ser556–Trp672 are Cytoplasmic-facing. The disordered stretch occupies residues Arg579 to Ser621. The helical transmembrane segment at Ile673–Leu693 threads the bilayer. Over Leu694–Phe709 the chain is Vacuolar. The helical transmembrane segment at Ile710–Ile730 threads the bilayer. Over His731 to Val737 the chain is Cytoplasmic. Residues Pro738–Phe758 traverse the membrane as a helical segment. Residues Ser759 to Gln993 are Vacuolar-facing. N-linked (GlcNAc...) asparagine glycans are attached at residues Asn806, Asn847, and Asn955.

It belongs to the peptidase M28 family. Zn(2+) is required as a cofactor.

Its subcellular location is the vacuole membrane. Functionally, may be involved in vacuolar sorting and osmoregulation. The chain is Vacuolar membrane protease from Paracoccidioides lutzii (strain ATCC MYA-826 / Pb01) (Paracoccidioides brasiliensis).